We begin with the raw amino-acid sequence, 519 residues long: 2-isopropylmalate synthase (519 aa).

Residues 12-274 (VVIFDTTLRD…WCNVESTMLT (263 aa)) enclose the Pyruvate carboxyltransferase domain. Mn(2+)-binding residues include aspartate 21, histidine 209, histidine 211, and asparagine 245. The interval 398–519 (KLSSLTVIAG…QRDVPAAAAS (122 aa)) is regulatory domain.

The protein belongs to the alpha-IPM synthase/homocitrate synthase family. LeuA type 1 subfamily. In terms of assembly, homodimer. The cofactor is Mn(2+).

It localises to the cytoplasm. It carries out the reaction 3-methyl-2-oxobutanoate + acetyl-CoA + H2O = (2S)-2-isopropylmalate + CoA + H(+). It functions in the pathway amino-acid biosynthesis; L-leucine biosynthesis; L-leucine from 3-methyl-2-oxobutanoate: step 1/4. Functionally, catalyzes the condensation of the acetyl group of acetyl-CoA with 3-methyl-2-oxobutanoate (2-ketoisovalerate) to form 3-carboxy-3-hydroxy-4-methylpentanoate (2-isopropylmalate). The protein is 2-isopropylmalate synthase of Nitrobacter winogradskyi (strain ATCC 25391 / DSM 10237 / CIP 104748 / NCIMB 11846 / Nb-255).